The primary structure comprises 337 residues: DNA-directed RNA polymerase subunit alpha (337 aa).

The segment at 1–233 (MIQKNWQELI…DQLSVFVNFK (233 aa)) is alpha N-terminal domain (alpha-NTD). The tract at residues 249-337 (FNPALLKKVD…DLAKHYEDQY (89 aa)) is alpha C-terminal domain (alpha-CTD).

It belongs to the RNA polymerase alpha chain family. Homodimer. The RNAP catalytic core consists of 2 alpha, 1 beta, 1 beta' and 1 omega subunit. When a sigma factor is associated with the core the holoenzyme is formed, which can initiate transcription.

The enzyme catalyses RNA(n) + a ribonucleoside 5'-triphosphate = RNA(n+1) + diphosphate. Functionally, DNA-dependent RNA polymerase catalyzes the transcription of DNA into RNA using the four ribonucleoside triphosphates as substrates. The polypeptide is DNA-directed RNA polymerase subunit alpha (Bartonella bacilliformis (strain ATCC 35685 / KC583 / Herrer 020/F12,63)).